A 234-amino-acid chain; its full sequence is Sugar fermentation stimulation protein A (234 aa).

The H-T-H motif DNA-binding region spans 201 to 220; sequence LLSEAQQRGVEILAYKAEIS.

This sequence belongs to the SfsA family.

Binds to DNA non-specifically. Could be a regulatory factor involved in maltose metabolism. The chain is Sugar fermentation stimulation protein A from Shigella flexneri.